A 261-amino-acid polypeptide reads, in one-letter code: CD40 ligand (261 aa).

Residues 1-22 lie on the Cytoplasmic side of the membrane; it reads MVETYHQPAPRSAATGLPVSMK. Residues 23-43 traverse the membrane as a helical; Signal-anchor for type II membrane protein segment; that stretch reads IFMYLLTVFLITQMIGSALFA. Over 44–261 the chain is Extracellular; it reads VYLHRRLDKI…GFTSFGLLKL (218 aa). One can recognise a THD domain in the interval 122–261; the sequence is IAAHVISEAS…GFTSFGLLKL (140 aa). Cysteines 178 and 218 form a disulfide. Asn-240 is a glycosylation site (N-linked (GlcNAc...) asparagine).

Belongs to the tumor necrosis factor family. As to quaternary structure, homotrimer. Interacts with CD28. CD40 ligand, soluble form: Exists as either a monomer or a homotrimer. Forms a ternary complex between CD40 and integrins for CD40-CD40LG signaling. The soluble form derives from the membrane form by proteolytic processing.

It localises to the cell membrane. The protein localises to the cell surface. Its subcellular location is the secreted. Cytokine that acts as a ligand to CD40/TNFRSF5. Costimulates T-cell proliferation and cytokine production. Its cross-linking on T-cells generates a costimulatory signal which enhances the production of IL4 and IL10 in conjunction with the TCR/CD3 ligation and CD28 costimulation. Induces the activation of NF-kappa-B. Induces the activation of kinases MAPK8 and PAK2 in T-cells. Mediates B-cell proliferation in the absence of co-stimulus as well as IgE production in the presence of IL4. Involved in immunoglobulin class switching. Functionally, acts as a ligand for integrins, specifically ITGA5:ITGB1 and ITGAV:ITGB3; both integrins and the CD40 receptor are required for activation of CD40-CD40LG signaling, which have cell-type dependent effects, such as B-cell activation, NF-kappa-B signaling and anti-apoptotic signaling. This Aotus trivirgatus (Three-striped night monkey) protein is CD40 ligand (CD40LG).